Reading from the N-terminus, the 144-residue chain is Large ribosomal subunit protein uL15 (144 aa).

The interval 1–54 (MRLNTLSPAEGSKKAGKRLGRGIGSGLGKTGGRGHKGQKSRSGGGVRRGFEGGQ) is disordered. Over residues 21–31 (RGIGSGLGKTG) the composition is skewed to gly residues.

Belongs to the universal ribosomal protein uL15 family. In terms of assembly, part of the 50S ribosomal subunit.

In terms of biological role, binds to the 23S rRNA. This Salmonella enteritidis PT4 (strain P125109) protein is Large ribosomal subunit protein uL15.